The following is a 1066-amino-acid chain: Probable sucrose-phosphate synthase 4 (1066 aa).

Disordered regions lie at residues 132 to 166 and 688 to 714; these read YAAADMSEDLSEGEKGENINESSSTHDESTRGRMP and PRHPRWQKSDDATEVSEADSPGDSLRD. Residues 143-162 are compositionally biased toward basic and acidic residues; it reads EGEKGENINESSSTHDESTR.

It belongs to the glycosyltransferase 1 family. Homodimer or homotetramer. As to expression, expressed in germinating seeds.

The enzyme catalyses beta-D-fructose 6-phosphate + UDP-alpha-D-glucose = sucrose 6(F)-phosphate + UDP + H(+). The protein operates within glycan biosynthesis; sucrose biosynthesis; sucrose from D-fructose 6-phosphate and UDP-alpha-D-glucose: step 1/2. Its activity is regulated as follows. Activity is regulated by phosphorylation and moderated by concentration of metabolites and light. Functionally, plays a role in photosynthetic sucrose synthesis by catalyzing the rate-limiting step of sucrose biosynthesis from UDP-glucose and fructose- 6-phosphate. Involved in the regulation of carbon partitioning in the leaves of plants. May regulate the synthesis of sucrose and therefore play a major role as a limiting factor in the export of photoassimilates out of the leaf. Plays a role for sucrose availability that is essential for plant growth and fiber elongation. In Oryza sativa subsp. japonica (Rice), this protein is Probable sucrose-phosphate synthase 4 (SPS4).